The sequence spans 123 residues: Small ribosomal subunit protein eS25 (123 aa).

Over residues 1–13 (MPPKKDTKGDSKK) the composition is skewed to basic and acidic residues. Residues 1-34 (MPPKKDTKGDSKKGQKAKAGSGGGKAKKKKWSKG) form a disordered region. Over residues 25 to 34 (KAKKKKWSKG) the composition is skewed to basic residues.

The protein belongs to the eukaryotic ribosomal protein eS25 family.

This is Small ribosomal subunit protein eS25 (RPS25) from Branchiostoma belcheri (Amphioxus).